The chain runs to 127 residues: Holo-[acyl-carrier-protein] synthase (127 aa).

Mg(2+) is bound by residues Asp9 and Glu58.

The protein belongs to the P-Pant transferase superfamily. AcpS family. The cofactor is Mg(2+).

Its subcellular location is the cytoplasm. The catalysed reaction is apo-[ACP] + CoA = holo-[ACP] + adenosine 3',5'-bisphosphate + H(+). Transfers the 4'-phosphopantetheine moiety from coenzyme A to a Ser of acyl-carrier-protein. The sequence is that of Holo-[acyl-carrier-protein] synthase from Shewanella sp. (strain W3-18-1).